We begin with the raw amino-acid sequence, 172 residues long: Small ribosomal subunit protein uS5 (172 aa).

The S5 DRBM domain occupies 17–80 (LREKMIAVNR…DEARRKMVKV (64 aa)).

It belongs to the universal ribosomal protein uS5 family. In terms of assembly, part of the 30S ribosomal subunit. Contacts proteins S4 and S8.

With S4 and S12 plays an important role in translational accuracy. In terms of biological role, located at the back of the 30S subunit body where it stabilizes the conformation of the head with respect to the body. The polypeptide is Small ribosomal subunit protein uS5 (Ralstonia nicotianae (strain ATCC BAA-1114 / GMI1000) (Ralstonia solanacearum)).